The chain runs to 545 residues: MAKDIYFNEDARKSLLSGVEKLSNAVKVTLGPKGRNVLIDKKFGSPTVTKDGVSVAREIELENPFENMGAQLLKEVAIKTNDVAGDGTTTATVLAYAIAREGLKNVSSGINPIGIKKGIDHAVSLAAEKIRQSAKKITTKEEIAQVASISANNDSYIGEKIAEAMDKVGKDGVITVEESKTFDTTISYVEGMQFDRGYLSPYFSTNKENMSVSFDDAFILIYEKKISSIKELLPVLEKVLGTNKPLLIIAEDIEGDALAALVLNSVRGALKVCAIKSPGFGDRRKAMLEDIAVLTGGVLISEELGLTLETVEIEQLGQAKTIKVDKDNTTIINTGNKEQIKERSELIKKQIEDSTSEYDKEKLQERLAKLVGGVAVINVGAVTEVELKEKKHRVEDALSATRAAVEEGVVPGGGSTLIEVAMYLDTIDTSKLSYEEKQGFEIVKRSLEEPMRQIISNAGFEGSIYIHQIKTEKKGLGFDASSFKWVNMIESGIIDPAKVTRSALQNAASIAGLLLTTECAITDIKEEKNTSGGGGYPMDPGMGMM.

ATP-binding positions include 29–32 (TLGP), Lys50, 86–90 (DGTTT), Gly413, and Asp495.

It belongs to the chaperonin (HSP60) family. Forms a cylinder of 14 subunits composed of two heptameric rings stacked back-to-back. Interacts with the co-chaperonin GroES.

The protein resides in the cytoplasm. The catalysed reaction is ATP + H2O + a folded polypeptide = ADP + phosphate + an unfolded polypeptide.. In terms of biological role, together with its co-chaperonin GroES, plays an essential role in assisting protein folding. The GroEL-GroES system forms a nano-cage that allows encapsulation of the non-native substrate proteins and provides a physical environment optimized to promote and accelerate protein folding. The chain is Chaperonin GroEL from Borreliella afzelii (strain PKo) (Borrelia afzelii).